Consider the following 334-residue polypeptide: Cytosolic Fe-S cluster assembly factor NBP35 (334 aa).

The [4Fe-4S] cluster site is built by Cys-33, Cys-47, Cys-50, and Cys-56. 86–93 contributes to the ATP binding site; the sequence is GKGGVGKS. The [4Fe-4S] cluster site is built by Cys-259 and Cys-262.

The protein belongs to the Mrp/NBP35 ATP-binding proteins family. NUBP1/NBP35 subfamily. In terms of assembly, heterotetramer of 2 NBP35 and 2 CFD1 chains. Requires [4Fe-4S] cluster as cofactor.

It localises to the cytoplasm. The protein resides in the nucleus. In terms of biological role, component of the cytosolic iron-sulfur (Fe/S) protein assembly (CIA) machinery. Required for maturation of extramitochondrial Fe-S proteins. The NBP35-CFD1 heterotetramer forms a Fe-S scaffold complex, mediating the de novo assembly of an Fe-S cluster and its transfer to target apoproteins. Required for biogenesis and export of both ribosomal subunits, which may reflect a role in assembly of the Fe/S clusters in RLI1, a protein which performs rRNA processing and ribosome export. The sequence is that of Cytosolic Fe-S cluster assembly factor NBP35 from Candida glabrata (strain ATCC 2001 / BCRC 20586 / JCM 3761 / NBRC 0622 / NRRL Y-65 / CBS 138) (Yeast).